Here is a 385-residue protein sequence, read N- to C-terminus: Probable tRNA sulfurtransferase (385 aa).

One can recognise a THUMP domain in the interval 57-160 (DGVIERVKKV…RGNAYVFTDK (104 aa)). Residues 180–181 (ML), 205–206 (YY), Arg-262, Gly-284, and Gln-293 contribute to the ATP site.

Belongs to the ThiI family.

The protein localises to the cytoplasm. It carries out the reaction [ThiI sulfur-carrier protein]-S-sulfanyl-L-cysteine + a uridine in tRNA + 2 reduced [2Fe-2S]-[ferredoxin] + ATP + H(+) = [ThiI sulfur-carrier protein]-L-cysteine + a 4-thiouridine in tRNA + 2 oxidized [2Fe-2S]-[ferredoxin] + AMP + diphosphate. The catalysed reaction is [ThiS sulfur-carrier protein]-C-terminal Gly-Gly-AMP + S-sulfanyl-L-cysteinyl-[cysteine desulfurase] + AH2 = [ThiS sulfur-carrier protein]-C-terminal-Gly-aminoethanethioate + L-cysteinyl-[cysteine desulfurase] + A + AMP + 2 H(+). It functions in the pathway cofactor biosynthesis; thiamine diphosphate biosynthesis. In terms of biological role, catalyzes the ATP-dependent transfer of a sulfur to tRNA to produce 4-thiouridine in position 8 of tRNAs, which functions as a near-UV photosensor. Also catalyzes the transfer of sulfur to the sulfur carrier protein ThiS, forming ThiS-thiocarboxylate. This is a step in the synthesis of thiazole, in the thiamine biosynthesis pathway. The sulfur is donated as persulfide by IscS. In Clostridium perfringens (strain SM101 / Type A), this protein is Probable tRNA sulfurtransferase.